Reading from the N-terminus, the 84-residue chain is Delta-conotoxin-like MVIA (84 aa).

The N-terminal stretch at 1–22 (MKLTCVMIVAVLFLTTWTFVTA) is a signal peptide. A propeptide spanning residues 23 to 49 (DDSRYGLKNLFPKARHEMKNPEASKLN) is cleaved from the precursor. Disulfide bonds link C54/C69, C61/C73, and C68/C77. P65 bears the 4-hydroxyproline mark. Position 83 is a serine amide (S83).

This sequence belongs to the conotoxin O1 superfamily. Expressed by the venom duct.

It localises to the secreted. In terms of biological role, delta-conotoxins bind to site 6 of voltage-gated sodium channels (Nav) and inhibit the inactivation process. In Conus magus (Magical cone), this protein is Delta-conotoxin-like MVIA.